Here is a 342-residue protein sequence, read N- to C-terminus: Protein FinQ (342 aa).

Residues 208–227 (RDREFNLLNAQISMVLYICS) constitute a DNA-binding region (H-T-H motif).

Its function is as follows. Transcriptional inhibitor of the F plasmid transfer genes. FinQ may regulate a gene or genes encoded on the IncI plasmids, and coincidentally may inhibit F transfer when coresident. In Escherichia coli, this protein is Protein FinQ (finQ).